The chain runs to 395 residues: Probable L-tyrosine/L-aspartate decarboxylase (395 aa).

An N6-(pyridoxal phosphate)lysine modification is found at K242.

The protein belongs to the group II decarboxylase family. MfnA subfamily. It depends on pyridoxal 5'-phosphate as a cofactor.

It catalyses the reaction L-tyrosine + H(+) = tyramine + CO2. The catalysed reaction is L-aspartate + H(+) = beta-alanine + CO2. The protein operates within cofactor biosynthesis; methanofuran biosynthesis. Its pathway is cofactor biosynthesis; coenzyme A biosynthesis. Functionally, catalyzes the decarboxylation of L-tyrosine to produce tyramine for methanofuran biosynthesis. Can also catalyze the decarboxylation of L-aspartate to produce beta-alanine for coenzyme A (CoA) biosynthesis. This is Probable L-tyrosine/L-aspartate decarboxylase from Methanosarcina acetivorans (strain ATCC 35395 / DSM 2834 / JCM 12185 / C2A).